The primary structure comprises 364 residues: Aminomethyltransferase (364 aa).

The protein belongs to the GcvT family. The glycine cleavage system is composed of four proteins: P, T, L and H.

It catalyses the reaction N(6)-[(R)-S(8)-aminomethyldihydrolipoyl]-L-lysyl-[protein] + (6S)-5,6,7,8-tetrahydrofolate = N(6)-[(R)-dihydrolipoyl]-L-lysyl-[protein] + (6R)-5,10-methylene-5,6,7,8-tetrahydrofolate + NH4(+). The glycine cleavage system catalyzes the degradation of glycine. This is Aminomethyltransferase from Shewanella pealeana (strain ATCC 700345 / ANG-SQ1).